Consider the following 652-residue polypeptide: Putative asparagine synthetase [glutamine-hydrolyzing] (652 aa).

The For GATase activity role is filled by Cys2. A Glutamine amidotransferase type-2 domain is found at 2 to 231; the sequence is CGLLAFVAAP…SGCFARIRAD (230 aa). L-glutamine is bound by residues 60-64, 89-91, and Asp115; these read RLSII and NGE. 382 to 383 lines the ATP pocket; sequence SG.

It belongs to the asparagine synthetase family.

The enzyme catalyses L-aspartate + L-glutamine + ATP + H2O = L-asparagine + L-glutamate + AMP + diphosphate + H(+). Its pathway is amino-acid biosynthesis; L-asparagine biosynthesis; L-asparagine from L-aspartate (L-Gln route): step 1/1. This chain is Putative asparagine synthetase [glutamine-hydrolyzing] (asnB), found in Mycobacterium bovis (strain ATCC BAA-935 / AF2122/97).